Here is a 332-residue protein sequence, read N- to C-terminus: Fructose-1,6-bisphosphatase class 1 (332 aa).

Residues Glu89, Asp110, Leu112, and Asp113 each coordinate Mg(2+). Substrate contacts are provided by residues 113-116 (DGSS), Asn206, Tyr239, 257-259 (YLY), and Lys269. Residue Glu275 participates in Mg(2+) binding.

Belongs to the FBPase class 1 family. Homotetramer. The cofactor is Mg(2+).

Its subcellular location is the cytoplasm. The catalysed reaction is beta-D-fructose 1,6-bisphosphate + H2O = beta-D-fructose 6-phosphate + phosphate. Its pathway is carbohydrate biosynthesis; gluconeogenesis. The sequence is that of Fructose-1,6-bisphosphatase class 1 from Cronobacter sakazakii (strain ATCC BAA-894) (Enterobacter sakazakii).